The chain runs to 616 residues: Chaperone protein HscA homolog (616 aa).

Belongs to the heat shock protein 70 family.

Its function is as follows. Chaperone involved in the maturation of iron-sulfur cluster-containing proteins. Has a low intrinsic ATPase activity which is markedly stimulated by HscB. This is Chaperone protein HscA homolog from Tolumonas auensis (strain DSM 9187 / NBRC 110442 / TA 4).